A 571-amino-acid chain; its full sequence is Zinc metalloproteinase nas-15 (571 aa).

An N-terminal signal peptide occupies residues 1-15 (MREYVLIFLVAPVFA). An N-linked (GlcNAc...) asparagine glycan is attached at asparagine 92. Residues 114 to 307 (NAIKNRLQLW…FKINTLYGCP (194 aa)) form the Peptidase M12A domain. 5 cysteine pairs are disulfide-bonded: cysteine 156–cysteine 306, cysteine 178–cysteine 197, cysteine 354–cysteine 388, cysteine 361–cysteine 381, and cysteine 370–cysteine 385. Histidine 205 contacts Zn(2+). Glutamate 206 is an active-site residue. Zn(2+) contacts are provided by histidine 209 and histidine 215. A ShKT 1 domain is found at 354 to 388 (CRNLRGDCDDLAKQGWCIRNPGWMRANCPISCGMC). Over residues 407–420 (TTTARPQKPVTQPI) the composition is skewed to low complexity. Residues 407 to 426 (TTTARPQKPVTQPIQPLPPV) are disordered. 3 disulfides stabilise this stretch: cysteine 437-cysteine 471, cysteine 444-cysteine 464, and cysteine 453-cysteine 468. One can recognise a ShKT 2 domain in the interval 437-471 (CEDLRVDCLVLVSQRYCKISQNFMKSYCAKSCGFC). A disordered region spans residues 500 to 530 (IRSRSPAPPVSTTTKAAPTTSTTSAAPYSPT). Over residues 509–527 (VSTTTKAAPTTSTTSAAPY) the composition is skewed to low complexity. 3 disulfide bridges follow: cysteine 536/cysteine 571, cysteine 543/cysteine 564, and cysteine 552/cysteine 568. Residues 536–571 (CSDRKHFCSHWKSAGFCEGIFMNYMKKNCPASCGLC) enclose the ShKT 3 domain.

Zn(2+) serves as cofactor. In terms of tissue distribution, expressed in pharyngeal marginal cells and muscles.

Its subcellular location is the secreted. Metalloprotease. The sequence is that of Zinc metalloproteinase nas-15 (nas-15) from Caenorhabditis elegans.